The primary structure comprises 779 residues: Acyl-homoserine lactone acylase PvdQ (779 aa).

A signal peptide spans 1–25 (MIISRPLCGFVFAGLSFAVILPAQA). Residues 202-223 (SQQVQALQLAAVRNQRFALERG) constitute a propeptide, spacer peptide. Catalysis depends on Ser224, which acts as the Nucleophile. The segment covering 731–746 (ESSNPQSAHSSDQTEA) has biased composition (polar residues). The interval 731–752 (ESSNPQSAHSSDQTEAFSKKQW) is disordered.

It belongs to the peptidase S45 family. Heterodimer of an alpha subunit and a beta subunit processed from the same precursor.

It is found in the periplasm. It carries out the reaction an N-acyl-L-homoserine lactone + H2O = L-homoserine lactone + a carboxylate. Its function is as follows. Catalyzes the deacylation of acyl-homoserine lactone (AHL or acyl-HSL), releasing homoserine lactone (HSL) and the corresponding fatty acid. Possesses a specificity for the degradation of long-chain acyl-HSLs (side chains of 11 to 14 carbons in length). The chain is Acyl-homoserine lactone acylase PvdQ (pvdQ) from Pseudomonas savastanoi pv. phaseolicola (strain 1448A / Race 6) (Pseudomonas syringae pv. phaseolicola (strain 1448A / Race 6)).